The following is a 449-amino-acid chain: MITDQNSKPQQGELPTTHIDALTNSFSQFLRIEATSGAVLLLATVVALTLSNSPWSDGFRSLWETPIGIQIGAFQFLRSLRDLINDGLMTLFFFIVALEIKREVVLGELRNPRMVAFSVVAAAGGMLVPMGLYLALQHGQPGQHGWGVVMPTDTAFVIGCLALLGSRVPPGLRVFLLSLAVVDDLAAILVVAVGYSRSIDWTALALGAVGLVIIRGMALLGVRNIRVYFLAGAIIWLAVNASGIHATIVGVILGLMTPTAGWVSDQRLGEILRKVLSYPPGDHWSGDTEDNRALQVAGIAVRETLSPVERLEAMLHPWVAFGVMPLFALANAGVSITIKGLINPVSLAVMAGFVLGKPIGVTAFAWLGVRTGVAIRPAGLTWGGLVGGALLTGIGFTMALFIAGQAFQDATLNAAKLGILAASVVSSVAGLTLLCMFPKRDQTLDADFH.

11 consecutive transmembrane segments (helical) span residues 32-52, 87-107, 114-134, 145-165, 174-194, 202-222, 233-253, 318-338, 347-367, 382-402, and 417-437; these read IEAT…TLSN, GLMT…VVLG, MVAF…GLYL, GWGV…ALLG, VFLL…VAVG, TALA…LLGV, AIIW…GVIL, WVAF…SITI, LAVM…FAWL, WGGL…ALFI, and LGIL…LCMF.

The protein belongs to the NhaA Na(+)/H(+) (TC 2.A.33) antiporter family.

The protein resides in the cell inner membrane. It catalyses the reaction Na(+)(in) + 2 H(+)(out) = Na(+)(out) + 2 H(+)(in). Na(+)/H(+) antiporter that extrudes sodium in exchange for external protons. This chain is Na(+)/H(+) antiporter NhaA 1, found in Acidiphilium cryptum (strain JF-5).